Here is a 310-residue protein sequence, read N- to C-terminus: Acetylglutamate kinase (310 aa).

Substrate-binding positions include 70–71, arginine 92, and asparagine 191; that span reads GG.

The protein belongs to the acetylglutamate kinase family. ArgB subfamily.

The protein resides in the cytoplasm. It catalyses the reaction N-acetyl-L-glutamate + ATP = N-acetyl-L-glutamyl 5-phosphate + ADP. It participates in amino-acid biosynthesis; L-arginine biosynthesis; N(2)-acetyl-L-ornithine from L-glutamate: step 2/4. In terms of biological role, catalyzes the ATP-dependent phosphorylation of N-acetyl-L-glutamate. This chain is Acetylglutamate kinase, found in Corynebacterium diphtheriae (strain ATCC 700971 / NCTC 13129 / Biotype gravis).